The primary structure comprises 152 residues: Large ribosomal subunit protein bL9 (152 aa).

The protein belongs to the bacterial ribosomal protein bL9 family.

Binds to the 23S rRNA. This Prochlorococcus marinus (strain NATL1A) protein is Large ribosomal subunit protein bL9.